A 336-amino-acid chain; its full sequence is Holliday junction branch migration complex subunit RuvB (336 aa).

The interval 4-184 is large ATPase domain (RuvB-L); the sequence is SDRLISSQSI…FGIVQRLEYY (181 aa). Residues isoleucine 23, arginine 24, glycine 65, lysine 68, threonine 69, threonine 70, 131-133, arginine 174, tyrosine 184, and arginine 221 each bind ATP; that span reads EDY. A Mg(2+)-binding site is contributed by threonine 69. A small ATPAse domain (RuvB-S) region spans residues 185 to 255; that stretch reads SVDSLTKIVA…MAQQALEMLE (71 aa). A head domain (RuvB-H) region spans residues 258 to 336; the sequence is QHGFDLMDRK…HFGFSAIEQE (79 aa). DNA is bound by residues arginine 313 and arginine 318.

The protein belongs to the RuvB family. As to quaternary structure, homohexamer. Forms an RuvA(8)-RuvB(12)-Holliday junction (HJ) complex. HJ DNA is sandwiched between 2 RuvA tetramers; dsDNA enters through RuvA and exits via RuvB. An RuvB hexamer assembles on each DNA strand where it exits the tetramer. Each RuvB hexamer is contacted by two RuvA subunits (via domain III) on 2 adjacent RuvB subunits; this complex drives branch migration. In the full resolvosome a probable DNA-RuvA(4)-RuvB(12)-RuvC(2) complex forms which resolves the HJ.

It is found in the cytoplasm. It catalyses the reaction ATP + H2O = ADP + phosphate + H(+). In terms of biological role, the RuvA-RuvB-RuvC complex processes Holliday junction (HJ) DNA during genetic recombination and DNA repair, while the RuvA-RuvB complex plays an important role in the rescue of blocked DNA replication forks via replication fork reversal (RFR). RuvA specifically binds to HJ cruciform DNA, conferring on it an open structure. The RuvB hexamer acts as an ATP-dependent pump, pulling dsDNA into and through the RuvAB complex. RuvB forms 2 homohexamers on either side of HJ DNA bound by 1 or 2 RuvA tetramers; 4 subunits per hexamer contact DNA at a time. Coordinated motions by a converter formed by DNA-disengaged RuvB subunits stimulates ATP hydrolysis and nucleotide exchange. Immobilization of the converter enables RuvB to convert the ATP-contained energy into a lever motion, pulling 2 nucleotides of DNA out of the RuvA tetramer per ATP hydrolyzed, thus driving DNA branch migration. The RuvB motors rotate together with the DNA substrate, which together with the progressing nucleotide cycle form the mechanistic basis for DNA recombination by continuous HJ branch migration. Branch migration allows RuvC to scan DNA until it finds its consensus sequence, where it cleaves and resolves cruciform DNA. The chain is Holliday junction branch migration complex subunit RuvB from Legionella pneumophila (strain Paris).